We begin with the raw amino-acid sequence, 780 residues long: Replication origin-binding protein (780 aa).

A Helicase ATP-binding domain is found at 39–195 (SFENVRQPIK…AAFKPDTQIA (157 aa)). Residue 52 to 59 (AAMGSGKT) coordinates ATP.

It belongs to the herpesviridae OriBP family.

Probably involved in DNA replication. Binds the origin of replication (ori). The chain is Replication origin-binding protein (U73) from Homo sapiens (Human).